The primary structure comprises 188 residues: Threonylcarbamoyl-AMP synthase (188 aa).

The region spanning 3–188 is the YrdC-like domain; it reads QLHPSDIKDV…RSGKILRNGQ (186 aa).

Belongs to the SUA5 family. TsaC subfamily.

The protein resides in the cytoplasm. It carries out the reaction L-threonine + hydrogencarbonate + ATP = L-threonylcarbamoyladenylate + diphosphate + H2O. In terms of biological role, required for the formation of a threonylcarbamoyl group on adenosine at position 37 (t(6)A37) in tRNAs that read codons beginning with adenine. Catalyzes the conversion of L-threonine, HCO(3)(-)/CO(2) and ATP to give threonylcarbamoyl-AMP (TC-AMP) as the acyladenylate intermediate, with the release of diphosphate. In Shewanella oneidensis (strain ATCC 700550 / JCM 31522 / CIP 106686 / LMG 19005 / NCIMB 14063 / MR-1), this protein is Threonylcarbamoyl-AMP synthase.